Here is an 81-residue protein sequence, read N- to C-terminus: Photosystem I iron-sulfur center (81 aa).

2 consecutive 4Fe-4S ferredoxin-type domains span residues 2–31 (AHSV…MIPW) and 39–68 (IASA…VRVY). Positions 11, 14, 17, 21, 48, 51, 54, and 58 each coordinate [4Fe-4S] cluster.

The eukaryotic PSI reaction center is composed of at least 11 subunits. Requires [4Fe-4S] cluster as cofactor.

It localises to the plastid. The protein resides in the chloroplast thylakoid membrane. It carries out the reaction reduced [plastocyanin] + hnu + oxidized [2Fe-2S]-[ferredoxin] = oxidized [plastocyanin] + reduced [2Fe-2S]-[ferredoxin]. Functionally, apoprotein for the two 4Fe-4S centers FA and FB of photosystem I (PSI); essential for photochemical activity. FB is the terminal electron acceptor of PSI, donating electrons to ferredoxin. The C-terminus interacts with PsaA/B/D and helps assemble the protein into the PSI complex. Required for binding of PsaD and PsaE to PSI. PSI is a plastocyanin-ferredoxin oxidoreductase, converting photonic excitation into a charge separation, which transfers an electron from the donor P700 chlorophyll pair to the spectroscopically characterized acceptors A0, A1, FX, FA and FB in turn. The protein is Photosystem I iron-sulfur center of Zygnema circumcarinatum (Green alga).